The primary structure comprises 277 residues: Sulfur carrier protein FdhD (277 aa).

Catalysis depends on Cys-123, which acts as the Cysteine persulfide intermediate. Residue 263-268 (FVRGNK) participates in Mo-bis(molybdopterin guanine dinucleotide) binding.

Belongs to the FdhD family.

The protein resides in the cytoplasm. In terms of biological role, required for formate dehydrogenase (FDH) activity. Acts as a sulfur carrier protein that transfers sulfur from IscS to the molybdenum cofactor prior to its insertion into FDH. The sequence is that of Sulfur carrier protein FdhD from Corynebacterium efficiens (strain DSM 44549 / YS-314 / AJ 12310 / JCM 11189 / NBRC 100395).